The following is a 391-amino-acid chain: MISHEDVVVVGALRTPIGRATRGKLRSLRNDELVTAAIRGIIEKTGIDPRLIEEVILGHCLSSMEGNVAARMGVLRAGVPVETPVMIINRLCGSGLESVGLIAEKIRSGRIEIGLAGGFESMTSYGLPKEYTLSRGGACEDAEDCMLTLGEVSEMLGKTHGVTRSEADEYAVTSQKRALEATKKGHFLAEIIPMRVGDETVERDEGIRETSLGTIESLKPVFRQDGVCTSANSSQLSDGASAVLLMKRRRADELGLPVVAEFIDFIAVGLKPRDMGLGPVVAIEKLLKRNGLEKDQISYFEINEAFASQVLCCLRKLQIGEDRVNRYGGSIALGHPIGASGARIVCTLLSVMKNEALEGYGVASLCVGAGHGVAALFRRAAGSKPQDIKNT.

Catalysis depends on Cys92, which acts as the Acyl-thioester intermediate. Catalysis depends on proton acceptor residues His335 and Cys366.

The protein belongs to the thiolase-like superfamily. Thiolase family. In terms of assembly, homodimer.

The protein resides in the peroxisome. It catalyses the reaction an acyl-CoA + acetyl-CoA = a 3-oxoacyl-CoA + CoA. It participates in lipid metabolism; fatty acid metabolism. The sequence is that of 3-ketoacyl-CoA thiolase, peroxisomal (FOX3) from Encephalitozoon cuniculi (strain GB-M1) (Microsporidian parasite).